Consider the following 1158-residue polypeptide: ATP-dependent helicase/deoxyribonuclease subunit B (1158 aa).

In terms of domain architecture, UvrD-like helicase ATP-binding spans 1–275 (MTLHAYLGRA…QYFNQLYRFN (275 aa)). Residue 8 to 15 (GRAGTGKS) participates in ATP binding. In terms of domain architecture, UvrD-like helicase C-terminal spans 269-583 (NQLYRFNNQD…SIGTMDLAKV (315 aa)). Cysteine 784, cysteine 1112, cysteine 1115, and cysteine 1121 together coordinate [4Fe-4S] cluster.

Belongs to the helicase family. AddB/RexB type 1 subfamily. Heterodimer of AddA and AddB. Mg(2+) serves as cofactor. Requires [4Fe-4S] cluster as cofactor.

In terms of biological role, the heterodimer acts as both an ATP-dependent DNA helicase and an ATP-dependent, dual-direction single-stranded exonuclease. Recognizes the chi site generating a DNA molecule suitable for the initiation of homologous recombination. The AddB subunit has 5' -&gt; 3' nuclease activity but not helicase activity. The polypeptide is ATP-dependent helicase/deoxyribonuclease subunit B (Staphylococcus aureus (strain MW2)).